The chain runs to 129 residues: MNASISLLCFALLLISPFCLGYSDEERESDSLRVAEILQTSKDDESKINRTQELLDIFRRLAPSLSPEDRERIERSIKEHTDEILIDGVPSQGGRKTKYVGKILSPVAQGLAIGFFEELGGSLSRLFTG.

An N-terminal signal peptide occupies residues 1-21; the sequence is MNASISLLCFALLLISPFCLG.

The protein belongs to the Turandot family.

Its subcellular location is the secreted. A humoral factor that may play a role in stress tolerance. This Drosophila sechellia (Fruit fly) protein is Protein Turandot C.